A 167-amino-acid chain; its full sequence is Schlafen-like protein (167 aa).

The protein belongs to the Schlafen family. Subgroup poxviridae B3 subfamily.

The protein is Schlafen-like protein of Bos taurus (Bovine).